Consider the following 794-residue polypeptide: MHLEAARVIFFLWIFLQVQGIKDLSIKIYGSEIKDIDNAPRTEATKNTAKTYKVSTMRRIFDLAKHRTKRSAFFPTGVKVCPQESMEQILASLQAYYRLRVCQEAVWEAYRIFLDRLPEPGEYQDWVSVCQQETFCLFDIGKNFSNSQEHLDLLQQRMKQRNFLERKDEVVTKETLGELGQTPGLQQTLPVSHPGPCLSLPMTTAQRNPQLHPSRTPRVPTRERKIEFTDAAEDALEQKVELSISLANQKFKSELDNSQSPYYLEVAAKSQLQMQKIFKKLPGFKEIHVSGFRPKKERDGTSSTEMQLTAIFKKGKAEAKSPASDPLSLDSNKIESEGDPRGTTEEEKQRELYPTASELRKLISRALEEDQSLDVGTIQFTDEIVGSLPSLDPDTQLVLPTLLTDITKDATLSPELPLGQPRLETVDRAGHSPPGASPTDGWSPPAMTSTSLSETLPFFTASSVFPQTDQSATDIMSIDQTVLIPRLTVPTDDYSAISPLVPEISHLPTSSEDWLSTSSQDTMEYLDGVDLTKTPTSSEGPRNSVGMFPAWIIFLENITPDPGLRYITTSAMTVAARGRELVVFFSLRVANVPFSTDLFNKSSLEYQALEQRFTQLLVPNLRSNLTGFKQLEILNFRNGSVIVNSKVRFAKSVPYNLTKAVRGVLEDFRSTAAQQLDLEIDSYSLDVEPADQADPCKFLACGEFAQCVRNEWTEEAECRCRSGTQALVLPIEDCEDIPGKGTPCRSLDQSKNQVYEPGVKKFQRQQDNKVTMKRKFELLTIGYEEFNYQDWEGN.

Positions 1–20 are cleaved as a signal peptide; it reads MHLEAARVIFFLWIFLQVQG. The segment covering 202–213 has biased composition (polar residues); sequence MTTAQRNPQLHP. 3 disordered regions span residues 202-221, 314-355, and 413-449; these read MTTAQRNPQLHPSRTPRVPT, KGKA…LYPT, and SPELPLGQPRLETVDRAGHSPPGASPTDGWSPPAMTS. Positions 236–357 constitute an SEA 1 domain; it reads LEQKVELSIS…KQRELYPTAS (122 aa). The span at 332–351 shows a compositional bias: basic and acidic residues; sequence NKIESEGDPRGTTEEEKQRE. Residues Thr425 and Thr439 are each glycosylated (O-linked (GalNAc...) threonine). Ser443 is a glycosylation site (O-linked (GalNAc...) serine). Residues Thr448 and Thr450 are each glycosylated (O-linked (GalNAc...) threonine). In terms of domain architecture, SEA 2 spans 579-692; sequence RELVVFFSLR…YSLDVEPADQ (114 aa). The N-linked (GlcNAc...) asparagine glycan is linked to Asn624. The Heparin- and hyaluronan-binding signature appears at 629–637; it reads KQLEILNFR. N-linked (GlcNAc...) asparagine glycosylation occurs at Asn656.

Post-translationally, highly glycosylated (N- and O-linked carbohydrates and sialic acid).

Its subcellular location is the cell projection. The protein resides in the cilium. It is found in the photoreceptor outer segment. It localises to the secreted. The protein localises to the extracellular space. Its subcellular location is the extracellular matrix. The protein resides in the interphotoreceptor matrix. It is found in the photoreceptor inner segment. In terms of biological role, chondroitin sulfate-, heparin- and hyaluronan-binding protein. May serve to form a basic macromolecular scaffold comprising the insoluble interphotoreceptor matrix. The sequence is that of Interphotoreceptor matrix proteoglycan 1 (IMPG1) from Bos taurus (Bovine).